The chain runs to 494 residues: Cytochrome P450 71D94 (494 aa).

Residues 1–21 (MELNLLLVIIILVATYTVSLL) form a helical; Signal-anchor for type II membrane protein membrane-spanning segment. Cys-434 serves as a coordination point for heme.

This sequence belongs to the cytochrome P450 family. Heme serves as cofactor.

It is found in the endoplasmic reticulum membrane. Functionally, cytochrome P450 oxygenase of undefined substrate. Not active with limonene, (+)- or (-)-piperitone, (-)-isopiperitone, piperitenone or (+)-pulegone. The chain is Cytochrome P450 71D94 (CYP71D94) from Mentha gracilis (Gingermint).